The sequence spans 557 residues: Dihydroxy-acid dehydratase (557 aa).

D78 lines the Mg(2+) pocket. C119 contacts [2Fe-2S] cluster. The Mg(2+) site is built by D120 and K121. Residue K121 is modified to N6-carboxylysine. C192 is a binding site for [2Fe-2S] cluster. E442 is a Mg(2+) binding site. Residue S468 is the Proton acceptor of the active site.

This sequence belongs to the IlvD/Edd family. In terms of assembly, homodimer. [2Fe-2S] cluster is required as a cofactor. Requires Mg(2+) as cofactor.

The catalysed reaction is (2R)-2,3-dihydroxy-3-methylbutanoate = 3-methyl-2-oxobutanoate + H2O. It carries out the reaction (2R,3R)-2,3-dihydroxy-3-methylpentanoate = (S)-3-methyl-2-oxopentanoate + H2O. It participates in amino-acid biosynthesis; L-isoleucine biosynthesis; L-isoleucine from 2-oxobutanoate: step 3/4. It functions in the pathway amino-acid biosynthesis; L-valine biosynthesis; L-valine from pyruvate: step 3/4. Functionally, functions in the biosynthesis of branched-chain amino acids. Catalyzes the dehydration of (2R,3R)-2,3-dihydroxy-3-methylpentanoate (2,3-dihydroxy-3-methylvalerate) into 2-oxo-3-methylpentanoate (2-oxo-3-methylvalerate) and of (2R)-2,3-dihydroxy-3-methylbutanoate (2,3-dihydroxyisovalerate) into 2-oxo-3-methylbutanoate (2-oxoisovalerate), the penultimate precursor to L-isoleucine and L-valine, respectively. The polypeptide is Dihydroxy-acid dehydratase (Bacillus anthracis (strain A0248)).